Here is a 212-residue protein sequence, read N- to C-terminus: Cytochrome c biogenesis ATP-binding export protein CcmA (212 aa).

Residues 7-209 (LSLQNLSCQR…HLQKLNLAAY (203 aa)) enclose the ABC transporter domain. An ATP-binding site is contributed by 39 to 46 (GHNGIGKT).

The protein belongs to the ABC transporter superfamily. CcmA exporter (TC 3.A.1.107) family. In terms of assembly, the complex is composed of two ATP-binding proteins (CcmA) and two transmembrane proteins (CcmB).

Its subcellular location is the cell inner membrane. The catalysed reaction is heme b(in) + ATP + H2O = heme b(out) + ADP + phosphate + H(+). In terms of biological role, part of the ABC transporter complex CcmAB involved in the biogenesis of c-type cytochromes; once thought to export heme, this seems not to be the case, but its exact role is uncertain. Responsible for energy coupling to the transport system. This is Cytochrome c biogenesis ATP-binding export protein CcmA from Haemophilus influenzae (strain ATCC 51907 / DSM 11121 / KW20 / Rd).